Reading from the N-terminus, the 891-residue chain is Echinoderm microtubule-associated protein-like elp-1 (891 aa).

The span at 77-88 (DQSRSPTCSGYS) shows a compositional bias: polar residues. The interval 77–167 (DQSRSPTCSG…ARGSPMRKWV (91 aa)) is disordered. The span at 104 to 117 (SPSHAPPRSSHANS) shows a compositional bias: low complexity. Residues 118 to 131 (KSLYINGMNNNSEE) are compositionally biased toward polar residues. WD repeat units lie at residues 330–401 (GHTC…TLMV), 404–447 (GFEK…REGE), 499–537 (DKPK…TTKQ), 541–579 (VHPG…RTRR), 626–664 (GDPG…VEFS), 708–747 (EGTA…NLLV), 753–792 (HIPA…CDGT), 816–853 (SSNG…VTAG), and 859–890 (GHGR…EWCL).

It belongs to the WD repeat EMAP family.

It is found in the cytoplasm. It localises to the cytoskeleton. Functionally, may modify the assembly dynamics of microtubules, such that microtubules are slightly longer, but more dynamic. The chain is Echinoderm microtubule-associated protein-like elp-1 (elp-1) from Caenorhabditis elegans.